Reading from the N-terminus, the 368-residue chain is Homoserine O-acetyltransferase (368 aa).

Residues 43-346 (ILLEHALTGT…EYGHDAFLVE (304 aa)) enclose the AB hydrolase-1 domain. The Nucleophile role is filled by serine 145. Arginine 212 is a binding site for substrate. Residues aspartate 307 and histidine 340 contribute to the active site. A substrate-binding site is contributed by aspartate 341.

The protein belongs to the AB hydrolase superfamily. MetX family. Homodimer.

The protein localises to the cytoplasm. The enzyme catalyses L-homoserine + acetyl-CoA = O-acetyl-L-homoserine + CoA. Its pathway is amino-acid biosynthesis; L-methionine biosynthesis via de novo pathway; O-acetyl-L-homoserine from L-homoserine: step 1/1. Transfers an acetyl group from acetyl-CoA to L-homoserine, forming acetyl-L-homoserine. This chain is Homoserine O-acetyltransferase, found in Listeria monocytogenes serovar 1/2a (strain ATCC BAA-679 / EGD-e).